The sequence spans 67 residues: Beta-defensin 36 (67 aa).

Positions 1–22 (MKLLLLTLAALLLVSQLTPGDA) are cleaved as a signal peptide. Intrachain disulfides connect cysteine 25–cysteine 52, cysteine 32–cysteine 46, and cysteine 36–cysteine 53.

The protein belongs to the beta-defensin family.

Its subcellular location is the secreted. Has antibacterial activity. This is Beta-defensin 36 (Defb36) from Mus musculus (Mouse).